A 120-amino-acid chain; its full sequence is NAD(P)H-quinone oxidoreductase subunit 3, chloroplastic (120 aa).

3 helical membrane-spanning segments follow: residues 9–29, 64–84, and 88–108; these read IFWT…WISG, MFAL…PWAM, and VLGV…VVGL.

The protein belongs to the complex I subunit 3 family. In terms of assembly, NDH is composed of at least 16 different subunits, 5 of which are encoded in the nucleus.

Its subcellular location is the plastid. The protein localises to the chloroplast thylakoid membrane. It catalyses the reaction a plastoquinone + NADH + (n+1) H(+)(in) = a plastoquinol + NAD(+) + n H(+)(out). The enzyme catalyses a plastoquinone + NADPH + (n+1) H(+)(in) = a plastoquinol + NADP(+) + n H(+)(out). Its function is as follows. NDH shuttles electrons from NAD(P)H:plastoquinone, via FMN and iron-sulfur (Fe-S) centers, to quinones in the photosynthetic chain and possibly in a chloroplast respiratory chain. The immediate electron acceptor for the enzyme in this species is believed to be plastoquinone. Couples the redox reaction to proton translocation, and thus conserves the redox energy in a proton gradient. In Brachypodium distachyon (Purple false brome), this protein is NAD(P)H-quinone oxidoreductase subunit 3, chloroplastic.